Here is a 166-residue protein sequence, read N- to C-terminus: Phospholipase A2 myotoxin inhibitor protein (166 aa).

An N-terminal signal peptide occupies residues 1–19 (MRLILLSGLLLLGTFLANG). The C-type lectin domain occupies 46-161 (LKYAFLTVHK…CDDNLLVVCE (116 aa)). Intrachain disulfides connect cysteine 83/cysteine 160 and cysteine 138/cysteine 152. An N-linked (GlcNAc...) asparagine glycan is attached at asparagine 122.

This sequence belongs to the alpha-type phospholipase A2 inhibitor family. Oligomer. Homotrimer; non-covalently linked. Post-translationally, glycosylated. The glycosylation has no role in the association of this PLI and PA2 enzyme. Expressed by the liver.

It is found in the secreted. This phospholipase A2 inhibitor binds directly phospholipase A2 in the presence or absence of calcium. Has anti-enzymatic, anti-myotoxic, anti-edema inducing, anti-cytotoxic, anti-bactericidal, and anti-lethal properties against basic and acidic phospholipases A2 from Bothrops venoms. This chain is Phospholipase A2 myotoxin inhibitor protein, found in Bothrops moojeni (Lance-headed viper).